The following is a 547-amino-acid chain: MFS-type transporter ungB (547 aa).

14 helical membrane-spanning segments follow: residues 14-34 (LLVT…ETVL), 50-70 (DVGW…MAWG), 80-100 (WVFL…GVSP), 111-131 (IAGL…SNTI), 138-158 (IYLG…PVIG), 169-189 (WCFF…VFCL), 210-230 (LLGS…LEWG), 238-258 (SWRV…FAVV), 279-299 (LGLI…VYYL), 316-336 (LAIL…GILV), 343-363 (TPFL…LSSL), 366-386 (ASGL…IGLG), 392-412 (VVPS…TLCF), and 475-495 (AVSE…LGSA). The interval 503-547 (PGHKEATEKVEGEGQGQGQQQEQDQGQGWGEVGESHALAHPTADK) is disordered. The span at 504–514 (GHKEATEKVEG) shows a compositional bias: basic and acidic residues.

Belongs to the major facilitator superfamily. TCR/Tet family.

It is found in the membrane. Its function is as follows. MFS-type transporter; part of the gene cluster that mediates the biosynthesis of the unguisins, gamma-aminobutyric acid (GABA)-containing fungal cyclic heptapeptides with the amino acid sequence cyclo-(D-Ala1-D-Val2-L-Phe3-D-Val4-D-Ala5-D-Trp6-GABA7) for unguisin A and cyclo-(D-Ala1-D-Val2-L-Leu3-D-Val4-D-Ala5-D-Trp6-GABA7) for unguisin B. May be involved in the secretion of unguisins. The protein is MFS-type transporter ungB of Aspergillus violaceofuscus (strain CBS 115571).